We begin with the raw amino-acid sequence, 298 residues long: Acetyl-coenzyme A carboxylase carboxyl transferase subunit beta (298 aa).

The CoA carboxyltransferase N-terminal domain maps to 25 to 295 (VWAKCANCGE…SADHREHVVA (271 aa)). Zn(2+)-binding residues include Cys29, Cys32, Cys48, and Cys51. The C4-type zinc finger occupies 29 to 51 (CANCGELTYQKQFNDALKVCPKC).

This sequence belongs to the AccD/PCCB family. Acetyl-CoA carboxylase is a heterohexamer composed of biotin carboxyl carrier protein (AccB), biotin carboxylase (AccC) and two subunits each of ACCase subunit alpha (AccA) and ACCase subunit beta (AccD). Zn(2+) is required as a cofactor.

Its subcellular location is the cytoplasm. The enzyme catalyses N(6)-carboxybiotinyl-L-lysyl-[protein] + acetyl-CoA = N(6)-biotinyl-L-lysyl-[protein] + malonyl-CoA. It functions in the pathway lipid metabolism; malonyl-CoA biosynthesis; malonyl-CoA from acetyl-CoA: step 1/1. Functionally, component of the acetyl coenzyme A carboxylase (ACC) complex. Biotin carboxylase (BC) catalyzes the carboxylation of biotin on its carrier protein (BCCP) and then the CO(2) group is transferred by the transcarboxylase to acetyl-CoA to form malonyl-CoA. This chain is Acetyl-coenzyme A carboxylase carboxyl transferase subunit beta, found in Herpetosiphon aurantiacus (strain ATCC 23779 / DSM 785 / 114-95).